Here is a 428-residue protein sequence, read N- to C-terminus: Elongation factor 1-alpha (428 aa).

The region spanning 5–215 is the tr-type G domain; it reads KPHVNIVFIG…ALDQIPEPPK (211 aa). The interval 14–21 is G1; it reads GHVDHGKS. 14 to 21 is a GTP binding site; sequence GHVDHGKS. Residue S21 participates in Mg(2+) binding. The tract at residues 68-72 is G2; it reads GITID. The G3 stretch occupies residues 89 to 92; that stretch reads DAPG. GTP contacts are provided by residues 89–93 and 144–147; these read DAPGH and NKMD. Residues 144–147 form a G4 region; sequence NKMD. The tract at residues 181-183 is G5; the sequence is SAW.

It belongs to the TRAFAC class translation factor GTPase superfamily. Classic translation factor GTPase family. EF-Tu/EF-1A subfamily.

The protein resides in the cytoplasm. The enzyme catalyses GTP + H2O = GDP + phosphate + H(+). In terms of biological role, GTP hydrolase that promotes the GTP-dependent binding of aminoacyl-tRNA to the A-site of ribosomes during protein biosynthesis. The chain is Elongation factor 1-alpha from Thermococcus gammatolerans (strain DSM 15229 / JCM 11827 / EJ3).